A 392-amino-acid polypeptide reads, in one-letter code: 2-oxoisovalerate dehydrogenase subunit beta, mitochondrial (392 aa).

A mitochondrion-targeting transit peptide spans 1 to 50; the sequence is MAAVAAFAGWLLRLRAAGADGPWRRLCGAGLSRGFLQSASAYGAAAQRRQ. Y152 contributes to the thiamine diphosphate binding site. 5 residues coordinate K(+): G178, L180, T181, C228, and D231. K232 carries the post-translational modification N6-acetyllysine. N233 contacts K(+). K241 is subject to N6-acetyllysine.

Heterotetramer of 2 alpha/BCKDHA and 2 beta chains/BCKDHB that forms the branched-chain alpha-keto acid decarboxylase (E1) component of the BCKD complex. The branched-chain alpha-ketoacid dehydrogenase is a large complex composed of three major building blocks E1, E2 and E3. It is organized around E2, a 24-meric cubic core composed of DBT, to which are associated 6 to 12 copies of E1, and approximately 6 copies of the dehydrogenase E3, a DLD dimer. It depends on thiamine diphosphate as a cofactor.

It is found in the mitochondrion matrix. It carries out the reaction N(6)-[(R)-lipoyl]-L-lysyl-[protein] + 3-methyl-2-oxobutanoate + H(+) = N(6)-[(R)-S(8)-2-methylpropanoyldihydrolipoyl]-L-lysyl-[protein] + CO2. In terms of biological role, together with BCKDHA forms the heterotetrameric E1 subunit of the mitochondrial branched-chain alpha-ketoacid dehydrogenase (BCKD) complex. The BCKD complex catalyzes the multi-step oxidative decarboxylation of alpha-ketoacids derived from the branched-chain amino-acids valine, leucine and isoleucine producing CO2 and acyl-CoA which is subsequently utilized to produce energy. The E1 subunit catalyzes the first step with the decarboxylation of the alpha-ketoacid forming an enzyme-product intermediate. A reductive acylation mediated by the lipoylamide cofactor of E2 extracts the acyl group from the E1 active site for the next step of the reaction. This Bos taurus (Bovine) protein is 2-oxoisovalerate dehydrogenase subunit beta, mitochondrial (BCKDHB).